We begin with the raw amino-acid sequence, 200 residues long: Small ribosomal subunit protein eS1 (200 aa).

It belongs to the eukaryotic ribosomal protein eS1 family.

The sequence is that of Small ribosomal subunit protein eS1 from Thermococcus onnurineus (strain NA1).